Consider the following 1039-residue polypeptide: Tetratricopeptide repeat protein 1 (1039 aa).

TPR repeat units lie at residues 51-84 (REFW…LKDS), 175-208 (ILGF…NPQF), 210-243 (PDPR…DPKN), 251-288 (GLYY…RNND), 326-359 (ADGY…DDRH), 361-393 (LSSV…NQSC), 437-469 (SDLY…LESA), 514-547 (LLLD…HPSF), 634-667 (EFRV…DPKN), 701-734 (ATTL…TGES), 737-770 (YGVL…ATLA), and 799-832 (PENS…EHPP). A coiled-coil region spans residues 838-929 (IEQRAKMAKN…SQQKASEDDM (92 aa)). The disordered stretch occupies residues 912-1039 (EEVLEWRKSQ…LNLFSEEDEE (128 aa)). Acidic residues predominate over residues 927–936 (DDMSLSDDEE). Phosphoserine is present on residues Ser930 and Ser932. The segment covering 940–953 (GKKKKKDRKKRKSK) has biased composition (basic residues). A phosphoserine mark is found at Ser959, Ser961, Ser964, and Ser998. Acidic residues predominate over residues 992-1006 (YTFDQDSDAEGNQEE). Positions 1007–1018 (EVSRTIEEKQDN) are enriched in basic and acidic residues.

Involved in promoting potassiumm ion uptake. This chain is Tetratricopeptide repeat protein 1 (tpr1), found in Schizosaccharomyces pombe (strain 972 / ATCC 24843) (Fission yeast).